A 762-amino-acid chain; its full sequence is Acyl-homoserine lactone acylase PvdQ (762 aa).

The N-terminal stretch at 1-23 is a signal peptide; it reads MGMRTVLTGLAGMLLGSMMPVQA. A propeptide spans 194 to 216 (spacer peptide); that stretch reads ALSGEQAFQVAEQRRQRFRLERG. S217 (nucleophile) is an active-site residue.

This sequence belongs to the peptidase S45 family. In terms of assembly, heterodimer of an alpha subunit and a beta subunit processed from the same precursor.

Its subcellular location is the periplasm. The enzyme catalyses an N-acyl-L-homoserine lactone + H2O = L-homoserine lactone + a carboxylate. Its function is as follows. Catalyzes the deacylation of acyl-homoserine lactone (AHL or acyl-HSL), releasing homoserine lactone (HSL) and the corresponding fatty acid. Possesses a specificity for the degradation of long-chain acyl-HSLs (side chains of 11 to 14 carbons in length). Degrades 3-oxo-C12-HSL, one of the two main AHL signal molecules of P.aeruginosa, and thereby functions as a quorum quencher, inhibiting the las quorum-sensing system. Therefore, may enable P.aeruginosa to modulate its own quorum-sensing-dependent pathogenic potential. Also appears to be required for pyoverdin biosynthesis. This chain is Acyl-homoserine lactone acylase PvdQ (pvdQ), found in Pseudomonas aeruginosa (strain ATCC 15692 / DSM 22644 / CIP 104116 / JCM 14847 / LMG 12228 / 1C / PRS 101 / PAO1).